Here is a 375-residue protein sequence, read N- to C-terminus: CMP-N-acetylneuraminate-beta-1,4-galactoside alpha-2,3-sialyltransferase (375 aa).

The Cytoplasmic segment spans residues 1–8; the sequence is MGLLVFVR. Residues 9–28 traverse the membrane as a helical; Signal-anchor for type II membrane protein segment; the sequence is NLLLALCLFLVLGFLYYSAW. Residues 29 to 375 lie on the Lumenal side of the membrane; the sequence is KLHLLQWEED…RVITDLSSGI (347 aa). N80 and N171 each carry an N-linked (GlcNAc...) asparagine glycan. Residues C160 and C314 are joined by a disulfide bond.

It belongs to the glycosyltransferase 29 family. In terms of processing, the soluble form derives from the membrane form by proteolytic processing. In terms of tissue distribution, highly expressed in adult skeletal muscle and in all fetal tissues examined and to a much lesser extent in placenta, lung and liver.

It localises to the golgi apparatus. It is found in the golgi stack membrane. Its subcellular location is the secreted. The catalysed reaction is a beta-D-galactosyl-(1-&gt;4)-N-acetyl-beta-D-glucosaminyl derivative + CMP-N-acetyl-beta-neuraminate = an N-acetyl-alpha-neuraminyl-(2-&gt;3)-beta-D-galactosyl-(1-&gt;4)-N-acetyl-beta-D-glucosaminyl derivative + CMP + H(+). It functions in the pathway protein modification; protein glycosylation. Functionally, catalyzes the formation of the NeuAc-alpha-2,3-Gal-beta-1,4-GlcNAc-, NeuAc-alpha-2,3-Gal-beta-1,3-GlcNAc- and NeuAc-alpha-2,3-Gal-beta-1,3-GalNAc- sequences found in terminal carbohydrate groups of glycoproteins and glycolipids. The highest activity is toward Gal-beta-1,3-GlcNAc and the lowest toward Gal-beta-1,3-GalNAc. This is CMP-N-acetylneuraminate-beta-1,4-galactoside alpha-2,3-sialyltransferase (ST3GAL3) from Homo sapiens (Human).